The sequence spans 25 residues: Caerin-1.9 (25 aa).

Leucine amide is present on Leu-25.

The protein belongs to the frog skin active peptide (FSAP) family. Caerin subfamily. In terms of tissue distribution, expressed by the skin dorsal glands.

The protein resides in the secreted. In terms of biological role, antimicrobial peptide. Adopts an alpha helical conformation which can disrupt bacterial membranes. Strongly inhibits the formation of NO by neuronal nitric oxide synthase (nNOS) at micromolar concentrations. Acts by a non-competitive mechanism, probably by binding to calcium/calmodulin and as a consequence blocking calmodulin attachment to nNOS. This Ranoidea chloris (Red-eyed tree frog) protein is Caerin-1.9.